Reading from the N-terminus, the 978-residue chain is NACHT, LRR and PYD domains-containing protein 4E (978 aa).

The 93-residue stretch at 1-93 folds into the Pyrin domain; sequence MASFFSDFGL…MERAGREIAG (93 aa). Residues 148–471 form the NACHT domain; sequence HMVFLQGVAG…FHLLKSHVDH (324 aa). 154-161 is an ATP binding site; it reads GVAGIGKS. 6 LRR repeats span residues 594–617, 694–717, 746–773, 802–825, 859–882, and 916–940; these read CSTL…HSYT, LLNL…LNQA, SKML…LCHP, NKTL…VLCG, NQNL…LLCD, and CKTL…LFEA.

It belongs to the NLRP family.

In terms of biological role, may be involved in inflammation and recognition of cytosolic pathogen-associated molecular patterns (PAMPs) not intercepted by membrane-bound receptors. This chain is NACHT, LRR and PYD domains-containing protein 4E (Nlrp4e), found in Mus musculus (Mouse).